The primary structure comprises 264 residues: Glutamate racemase (264 aa).

Residues Asp-9–Ser-10 and Tyr-41–Gly-42 each bind substrate. Catalysis depends on Cys-72, which acts as the Proton donor/acceptor. Asn-73–Thr-74 contacts substrate. The Proton donor/acceptor role is filled by Cys-183. Thr-184 to His-185 lines the substrate pocket.

It belongs to the aspartate/glutamate racemases family.

It carries out the reaction L-glutamate = D-glutamate. It participates in cell wall biogenesis; peptidoglycan biosynthesis. Its function is as follows. Provides the (R)-glutamate required for cell wall biosynthesis. This is Glutamate racemase from Geobacillus kaustophilus (strain HTA426).